Reading from the N-terminus, the 137-residue chain is Large ribosomal subunit protein bL17 (137 aa).

It belongs to the bacterial ribosomal protein bL17 family. As to quaternary structure, part of the 50S ribosomal subunit. Contacts protein L32.

This chain is Large ribosomal subunit protein bL17, found in Bradyrhizobium sp. (strain BTAi1 / ATCC BAA-1182).